The following is a 122-amino-acid chain: Large ribosomal subunit protein uL14 (122 aa).

It belongs to the universal ribosomal protein uL14 family. In terms of assembly, part of the 50S ribosomal subunit. Forms a cluster with proteins L3 and L19. In the 70S ribosome, L14 and L19 interact and together make contacts with the 16S rRNA in bridges B5 and B8.

Binds to 23S rRNA. Forms part of two intersubunit bridges in the 70S ribosome. The polypeptide is Large ribosomal subunit protein uL14 (Trichodesmium erythraeum (strain IMS101)).